Reading from the N-terminus, the 417-residue chain is GTP-binding protein YPT11 (417 aa).

Positions 1–34 are disordered; the sequence is MSQRKRYSLNVVTSPSIPSPTPSAPIRTNESNWE. GTP-binding positions include 97-104, 228-232, and 292-295; these read GDANVGKT, DTAGQ, and NKID. Residues C415 and C416 are each lipidated (S-geranylgeranyl cysteine).

The protein belongs to the small GTPase superfamily. Rab family. As to quaternary structure, interacts with MYO2 (via C-terminal tail domain). Interacts with YIF1, YIP3, YIP4 and YIP5.

The protein resides in the endoplasmic reticulum membrane. It localises to the bud tip. It is found in the bud neck. Involved in the positive control of both endoplasmic reticulum (ER) and mitochondrion inheritance during cell divison. Required for the MYO2-dependent retention of newly inherited mitochondria at the bud tip in developing daughter cells. The protein is GTP-binding protein YPT11 (YPT11) of Saccharomyces cerevisiae (strain RM11-1a) (Baker's yeast).